The sequence spans 156 residues: SPbeta prophage-derived uncharacterized protein YorH (156 aa).

The sequence is that of SPbeta prophage-derived uncharacterized protein YorH (yorH) from Bacillus subtilis (strain 168).